Here is a 270-residue protein sequence, read N- to C-terminus: uncharacterized protein (270 aa).

This is an uncharacterized protein from Escherichia coli (strain K12).